Reading from the N-terminus, the 188-residue chain is Pyridoxal 5'-phosphate synthase subunit PdxT (188 aa).

46–48 lines the L-glutamine pocket; that stretch reads GES. Cysteine 78 serves as the catalytic Nucleophile. Residues arginine 105 and 134 to 135 each bind L-glutamine; that span reads IR. Residues histidine 170 and glutamate 172 each act as charge relay system in the active site.

It belongs to the glutaminase PdxT/SNO family. In terms of assembly, in the presence of PdxS, forms a dodecamer of heterodimers. Only shows activity in the heterodimer.

The catalysed reaction is aldehydo-D-ribose 5-phosphate + D-glyceraldehyde 3-phosphate + L-glutamine = pyridoxal 5'-phosphate + L-glutamate + phosphate + 3 H2O + H(+). The enzyme catalyses L-glutamine + H2O = L-glutamate + NH4(+). Its pathway is cofactor biosynthesis; pyridoxal 5'-phosphate biosynthesis. Functionally, catalyzes the hydrolysis of glutamine to glutamate and ammonia as part of the biosynthesis of pyridoxal 5'-phosphate. The resulting ammonia molecule is channeled to the active site of PdxS. This Thermotoga petrophila (strain ATCC BAA-488 / DSM 13995 / JCM 10881 / RKU-1) protein is Pyridoxal 5'-phosphate synthase subunit PdxT.